Here is a 382-residue protein sequence, read N- to C-terminus: 4-hydroxy-3-methylbut-2-en-1-yl diphosphate synthase (flavodoxin) (382 aa).

The [4Fe-4S] cluster site is built by cysteine 290, cysteine 293, cysteine 327, and glutamate 334.

It belongs to the IspG family. Requires [4Fe-4S] cluster as cofactor.

The enzyme catalyses (2E)-4-hydroxy-3-methylbut-2-enyl diphosphate + oxidized [flavodoxin] + H2O + 2 H(+) = 2-C-methyl-D-erythritol 2,4-cyclic diphosphate + reduced [flavodoxin]. Its pathway is isoprenoid biosynthesis; isopentenyl diphosphate biosynthesis via DXP pathway; isopentenyl diphosphate from 1-deoxy-D-xylulose 5-phosphate: step 5/6. Its function is as follows. Converts 2C-methyl-D-erythritol 2,4-cyclodiphosphate (ME-2,4cPP) into 1-hydroxy-2-methyl-2-(E)-butenyl 4-diphosphate. The protein is 4-hydroxy-3-methylbut-2-en-1-yl diphosphate synthase (flavodoxin) of Rhodopirellula baltica (strain DSM 10527 / NCIMB 13988 / SH1).